Here is a 337-residue protein sequence, read N- to C-terminus: Large ribosomal subunit protein uL3 (337 aa).

The protein belongs to the universal ribosomal protein uL3 family. As to quaternary structure, part of the 50S ribosomal subunit. Forms a cluster with proteins L14 and L24e.

One of the primary rRNA binding proteins, it binds directly near the 3'-end of the 23S rRNA, where it nucleates assembly of the 50S subunit. This chain is Large ribosomal subunit protein uL3, found in Methanospirillum hungatei JF-1 (strain ATCC 27890 / DSM 864 / NBRC 100397 / JF-1).